The sequence spans 466 residues: tRNA-2-methylthio-N(6)-dimethylallyladenosine synthase (466 aa).

The 117-residue stretch at Gly21–Asn137 folds into the MTTase N-terminal domain. The [4Fe-4S] cluster site is built by Cys30, Cys66, Cys100, Cys172, Cys176, and Cys179. The region spanning Arg158 to Asp395 is the Radical SAM core domain. Positions Thr398–Gln466 constitute a TRAM domain.

It belongs to the methylthiotransferase family. MiaB subfamily. In terms of assembly, monomer. [4Fe-4S] cluster is required as a cofactor.

It is found in the cytoplasm. It catalyses the reaction N(6)-dimethylallyladenosine(37) in tRNA + (sulfur carrier)-SH + AH2 + 2 S-adenosyl-L-methionine = 2-methylsulfanyl-N(6)-dimethylallyladenosine(37) in tRNA + (sulfur carrier)-H + 5'-deoxyadenosine + L-methionine + A + S-adenosyl-L-homocysteine + 2 H(+). Its function is as follows. Catalyzes the methylthiolation of N6-(dimethylallyl)adenosine (i(6)A), leading to the formation of 2-methylthio-N6-(dimethylallyl)adenosine (ms(2)i(6)A) at position 37 in tRNAs that read codons beginning with uridine. The polypeptide is tRNA-2-methylthio-N(6)-dimethylallyladenosine synthase (Prochlorococcus marinus (strain SARG / CCMP1375 / SS120)).